Reading from the N-terminus, the 457-residue chain is Peptidyl-prolyl cis-trans isomerase FKBP5 (457 aa).

An N-acetylmethionine modification is found at Met1. Residues 1-26 (MTTDEGAKNSGESPTATVAEQGEDIT) are disordered. Ser13 is modified (phosphoserine). Lys28 carries the post-translational modification N6-acetyllysine. In terms of domain architecture, PPIase FKBP-type 1 spans 50–138 (GDKVYVHYKG…FFEIELLDFK (89 aa)). At Lys155 the chain carries N6-acetyllysine. The 87-residue stretch at 165–251 (GATVEIHLEG…IYEVTLKSFE (87 aa)) folds into the PPIase FKBP-type 2 domain. 3 TPR repeats span residues 268–301 (AAIVKEKGTVYFKGGKYMRAVIQYGKIVSWLEME), 317–350 (LAAFLNLAMCYLKLREYTKAVECCDKALGLDSAN), and 351–384 (EKGLYRRGEAQLLMNEFESAKGDFEKVLEVNPQN). Residues 421-457 (AKEEANKAMGKKTSEGVTNEKGTDSSAVEEEKAEGHV) form a disordered region. Ser445 carries the post-translational modification Phosphoserine.

As to quaternary structure, part of a heteromultimeric cytoplasmic complex with HSP90AA1, HSPA1A/HSPA1B and steroid receptors. Upon ligand binding dissociates from the complex and FKBP4 takes its place. Interacts with functionally mature heterooligomeric progesterone receptor complexes along with HSP90 and TEBP. Interacts with NR3C1. Interacts with Akt/AKT1 and PHLPP1; enhancing dephosphorylation and subsequent activation of Akt/AKT1. Interacts with IFI44L; this interaction modulates the kinase activity of IKBKB and IKBKE. Interacts with IKBKB and IKBKE. Post-translationally, acetylation impairs ability to promote interaction between Akt/AKT1 and PHLPP1. Deacetylation by SIRT7 promotes interaction between Akt/AKT1 and PHLPP1, leading to suppress Akt/AKT1 activation. In terms of processing, ubiquitinated, leading to degradation in a proteasome-dependent manner. Deubiquitinated by USP49, leading to stabilization.

It is found in the cytoplasm. Its subcellular location is the nucleus. The enzyme catalyses [protein]-peptidylproline (omega=180) = [protein]-peptidylproline (omega=0). Its activity is regulated as follows. Inhibited by both FK506 and rapamycin. In terms of biological role, immunophilin protein with PPIase and co-chaperone activities. Component of unligated steroid receptors heterocomplexes through interaction with heat-shock protein 90 (HSP90). Plays a role in the intracellular trafficking of heterooligomeric forms of steroid hormone receptors maintaining the complex into the cytoplasm when unliganded. Acts as a regulator of Akt/AKT1 activity by promoting the interaction between Akt/AKT1 and PHLPP1, thereby enhancing dephosphorylation and subsequent activation of Akt/AKT1. Interacts with IKBKE and IKBKB which facilitates IKK complex assembly leading to increased IKBKE and IKBKB kinase activity, NF-kappaB activation, and IFN production. This Chlorocebus aethiops (Green monkey) protein is Peptidyl-prolyl cis-trans isomerase FKBP5 (FKBP5).